A 408-amino-acid chain; its full sequence is Glutamate N-acetyltransferase (408 aa).

Positions 150, 176, 189, 271, 403, and 408 each coordinate substrate. Thr189 acts as the Nucleophile in catalysis.

The protein belongs to the ArgJ family. Heterotetramer of two alpha and two beta chains.

It is found in the cytoplasm. It carries out the reaction N(2)-acetyl-L-ornithine + L-glutamate = N-acetyl-L-glutamate + L-ornithine. It functions in the pathway amino-acid biosynthesis; L-arginine biosynthesis; L-ornithine and N-acetyl-L-glutamate from L-glutamate and N(2)-acetyl-L-ornithine (cyclic): step 1/1. In terms of biological role, catalyzes the transfer of the acetyl group from N(2)-acetylornithine to glutamate, forming N-acetylglutamate and L-ornithine. This chain is Glutamate N-acetyltransferase, found in Methanococcus maripaludis (strain C6 / ATCC BAA-1332).